A 789-amino-acid chain; its full sequence is Polyribonucleotide nucleotidyltransferase (789 aa).

Mg(2+) contacts are provided by aspartate 494 and aspartate 500. The region spanning 561–620 (PRIESIFINKDKIRNVIGSGGKNIREICEKTGARVEIMQDGTVMIYAINNDAVEYAKNMI) is the KH domain. The region spanning 630-697 (GKVFDGTVIE…DREYVQLSMR (68 aa)) is the S1 motif domain. The disordered stretch occupies residues 709–789 (GELYNIRKTN…NEVPRKPRFF (81 aa)). Residues 737–749 (SEKKRRGSGRSRR) are compositionally biased toward basic residues. A compositionally biased stretch (low complexity) spans 763–780 (NNGFGNGNRSFNDNRNGN).

It belongs to the polyribonucleotide nucleotidyltransferase family. The cofactor is Mg(2+).

It localises to the cytoplasm. The catalysed reaction is RNA(n+1) + phosphate = RNA(n) + a ribonucleoside 5'-diphosphate. Its function is as follows. Involved in mRNA degradation. Catalyzes the phosphorolysis of single-stranded polyribonucleotides processively in the 3'- to 5'-direction. This Ehrlichia ruminantium (strain Welgevonden) protein is Polyribonucleotide nucleotidyltransferase.